The sequence spans 319 residues: Malate dehydrogenase (319 aa).

Residues 11 to 16 (GAGNVG) and aspartate 36 each bind NAD(+). Residues arginine 85 and arginine 91 each contribute to the substrate site. Residues asparagine 98 and 121-123 (VSN) contribute to the NAD(+) site. Substrate contacts are provided by asparagine 123 and arginine 154. Catalysis depends on histidine 178, which acts as the Proton acceptor.

It belongs to the LDH/MDH superfamily. MDH type 3 family.

It carries out the reaction (S)-malate + NAD(+) = oxaloacetate + NADH + H(+). Catalyzes the reversible oxidation of malate to oxaloacetate. The chain is Malate dehydrogenase from Sulfurimonas denitrificans (strain ATCC 33889 / DSM 1251) (Thiomicrospira denitrificans (strain ATCC 33889 / DSM 1251)).